Reading from the N-terminus, the 713-residue chain is Signal transducer and activator of transcription 1 (713 aa).

Residues Trp477–Glu574 form the SH2 domain.

This sequence belongs to the transcription factor STAT family. Forms a homodimer or a heterodimer with a related family member.

It localises to the cytoplasm. It is found in the nucleus. In terms of biological role, carries out a dual function: signal transduction and activation of transcription. Activated STAT proteins play a role in repression of dauer formation. Neuronal expression is held in check by negative signals through the TGF-beta pathway that target the daf-3 transcription factor. This is Signal transducer and activator of transcription 1 from Caenorhabditis briggsae.